The following is an 83-amino-acid chain: Sulfur carrier protein TusA (83 aa).

Cys20 serves as the catalytic Cysteine persulfide intermediate.

The protein belongs to the sulfur carrier protein TusA family.

The protein resides in the cytoplasm. Functionally, sulfur carrier protein which probably makes part of a sulfur-relay system. In Pseudomonas fluorescens (strain SBW25), this protein is Sulfur carrier protein TusA.